A 512-amino-acid chain; its full sequence is Cytochrome P450 monooxygenase astB (512 aa).

The helical transmembrane segment at 5 to 25 (DLSFPAAIGAVFGAVAISVAA) threads the bilayer. A heme-binding site is contributed by Cys-452.

The protein belongs to the cytochrome P450 family. Heme is required as a cofactor.

It is found in the membrane. It participates in secondary metabolite biosynthesis; terpenoid biosynthesis. In terms of biological role, cytochrome P450 monooxygenase; part of the gene cluster that mediates the biosynthesis of the sesquiterpenoid aspterric acid (AA), an inhibitor of dihydroxy-acid dehydratase (DHAD) effective as an herbicide. AstB catalyzes the second step within the pathway and converts (-)-daucane produced by the terpene cyclase astA into an alpha-epoxy carboxylate intermediate which is further converted into the tricyclic aspterric acid by the cytochrome P450 monooxygenase astC. This is Cytochrome P450 monooxygenase astB from Aspergillus terreus (strain NIH 2624 / FGSC A1156).